A 195-amino-acid chain; its full sequence is Calcineurin B homologous protein 1 (195 aa).

Gly2 carries N-myristoyl glycine lipidation. EF-hand domains lie at 26-61 (SQIT…AINP), 66-101 (IINA…KSKD), 110-145 (SRSN…MVGV), and 151-186 (QLGS…VDVE). Ca(2+)-binding residues include Asp123, Asp125, Asp127, Lys129, Glu134, Asp164, Asp166, Asp168, and Glu175.

It belongs to the calcineurin regulatory subunit family. CHP subfamily. As to quaternary structure, monomer. In terms of processing, phosphorylated. Calcium-binding or N-myristoylation are necessary for the Na(+)/H(+) exchange activities.

It is found in the nucleus. The protein localises to the cytoplasm. Its subcellular location is the cytoskeleton. It localises to the endomembrane system. The protein resides in the endoplasmic reticulum-Golgi intermediate compartment. It is found in the endoplasmic reticulum. The protein localises to the cell membrane. Its subcellular location is the membrane. In terms of biological role, calcium-binding protein involved in different processes such as regulation of vesicular trafficking, plasma membrane Na(+)/H(+) exchanger and gene transcription. Involved in the constitutive exocytic membrane traffic. Mediates the association between microtubules and membrane-bound organelles of the endoplasmic reticulum and Golgi apparatus and is also required for the targeting and fusion of transcytotic vesicles (TCV) with the plasma membrane. Functions as an integral cofactor in cell pH regulation by controlling plasma membrane-type Na(+)/H(+) exchange activity. Inhibits serum- and GTPase-stimulated Na(+)/H(+) exchange. Plays a role as an inhibitor of ribosomal RNA transcription. Acts as a negative regulator of the calcineurin/NFAT signaling pathway. This Gallus gallus (Chicken) protein is Calcineurin B homologous protein 1 (CHP1).